Reading from the N-terminus, the 395-residue chain is Abhydrolase domain-containing protein (395 aa).

Positions 117–331 (PTIVINHGLT…INAIDDPIAP (215 aa)) constitute an AB hydrolase-1 domain. Residues Ser-200, Asp-327, and His-356 each act as charge relay system in the active site.

It belongs to the AB hydrolase superfamily. AB hydrolase 4 family.

The protein is Abhydrolase domain-containing protein (abhd) of Dictyostelium discoideum (Social amoeba).